The following is a 292-amino-acid chain: MQKYEKLEKIGEGTYGTVFKAKNRDTHEIVALKRVRLDDDDEGVPSSALREICLLKELKHKNIVRLHDVLHSDKKLTLVFEFCDQDLKKYFDSCNGDLDPEIVKSFMYQLLKGLAFCHSRNVLHRDLKPQNLLINRNGELKLADFGLARAFGIPVRCYSAEVVTLWYRPPDVLFGAKLYSTSIDMWSAGCIFAELANAGRPLFPGNDVDDQLKRIFRLLGTPTEEQWPAMTKLPDYKPYPMYPATMSLVNVVPKLNATGRDLLQNLLKCNPVQRICADEALQHPYFADFCPP.

A Protein kinase domain is found at 4-286; sequence YEKLEKIGEG…ADEALQHPYF (283 aa). ATP-binding positions include 10–18 and Lys33; that span reads IGEGTYGTV. Phosphothreonine is present on Thr14. At Tyr15 the chain carries Phosphotyrosine. Residue Thr17 is modified to Phosphothreonine. Position 46 is a phosphoserine (Ser46). Lys56 is modified (N6-acetyllysine). Ser72 carries the post-translational modification Phosphoserine. The active-site Proton acceptor is the Asp126. The residue at position 159 (Ser159) is a Phosphoserine. Tyr239 bears the Phosphotyrosine mark.

Belongs to the protein kinase superfamily. CMGC Ser/Thr protein kinase family. CDC2/CDKX subfamily.

Its subcellular location is the nucleus. The protein localises to the cytoplasm. The protein resides in the cell membrane. It is found in the perikaryon. It localises to the cell projection. Its subcellular location is the growth cone. The protein localises to the lamellipodium. The protein resides in the postsynaptic density. The catalysed reaction is L-seryl-[protein] + ATP = O-phospho-L-seryl-[protein] + ADP + H(+). It catalyses the reaction L-threonyl-[protein] + ATP = O-phospho-L-threonyl-[protein] + ADP + H(+). Its function is as follows. Proline-directed serine/threonine-protein kinase essential for neuronal cell cycle arrest and differentiation and may be involved in apoptotic cell death in neuronal diseases by triggering abortive cell cycle re-entry. Interacts with D1 and D3-type G1 cyclins. Regulates several neuronal development and physiological processes including neuronal survival, migration and differentiation, axonal and neurite growth, synaptogenesis, oligodendrocyte differentiation, synaptic plasticity and neurotransmission, by phosphorylating key proteins. In the mature central nervous system (CNS), regulates neurotransmitter movements by phosphorylating substrates associated with neurotransmitter release and synapse plasticity; synaptic vesicle exocytosis, vesicles fusion with the presynaptic membrane, and endocytosis. May regulate endothelial cell migration and angiogenesis via the modulation of lamellipodia formation. The complex p35/CDK5 may participate in the regulation of the circadian clock. This Xenopus laevis (African clawed frog) protein is Cyclin-dependent-like kinase 5 (cdk5).